The sequence spans 311 residues: Aspartate carbamoyltransferase catalytic subunit (311 aa).

2 residues coordinate carbamoyl phosphate: R59 and T60. Position 87 (K87) interacts with L-aspartate. The carbamoyl phosphate site is built by R109, H139, and Q142. R172 and R224 together coordinate L-aspartate. Positions 265 and 266 each coordinate carbamoyl phosphate.

Belongs to the aspartate/ornithine carbamoyltransferase superfamily. ATCase family. In terms of assembly, heterododecamer (2C3:3R2) of six catalytic PyrB chains organized as two trimers (C3), and six regulatory PyrI chains organized as three dimers (R2).

The enzyme catalyses carbamoyl phosphate + L-aspartate = N-carbamoyl-L-aspartate + phosphate + H(+). It functions in the pathway pyrimidine metabolism; UMP biosynthesis via de novo pathway; (S)-dihydroorotate from bicarbonate: step 2/3. In terms of biological role, catalyzes the condensation of carbamoyl phosphate and aspartate to form carbamoyl aspartate and inorganic phosphate, the committed step in the de novo pyrimidine nucleotide biosynthesis pathway. The sequence is that of Aspartate carbamoyltransferase catalytic subunit from Streptococcus pyogenes serotype M18 (strain MGAS8232).